A 403-amino-acid chain; its full sequence is Phosphopentomutase (403 aa).

The Mn(2+) site is built by Asp-13, Asp-298, His-303, Asp-339, His-340, and His-351.

This sequence belongs to the phosphopentomutase family. Requires Mn(2+) as cofactor.

It localises to the cytoplasm. It catalyses the reaction 2-deoxy-alpha-D-ribose 1-phosphate = 2-deoxy-D-ribose 5-phosphate. It carries out the reaction alpha-D-ribose 1-phosphate = D-ribose 5-phosphate. Its pathway is carbohydrate degradation; 2-deoxy-D-ribose 1-phosphate degradation; D-glyceraldehyde 3-phosphate and acetaldehyde from 2-deoxy-alpha-D-ribose 1-phosphate: step 1/2. In terms of biological role, isomerase that catalyzes the conversion of deoxy-ribose 1-phosphate (dRib-1-P) and ribose 1-phosphate (Rib-1-P) to deoxy-ribose 5-phosphate (dRib-5-P) and ribose 5-phosphate (Rib-5-P), respectively. The sequence is that of Phosphopentomutase from Streptococcus mutans serotype c (strain ATCC 700610 / UA159).